We begin with the raw amino-acid sequence, 549 residues long: MKKTNPVKTRAWLFLEKHYEDIKNRHMRDFFKEDPRRFDNFSLALDDILVDFSKNRITTKTLELLLNLAHEAGLKEMINSMFSGEHINETENRAVLHTALRRQGDEPVLADGKDVMPDVRAVLEQMRVFSGRIITGEWKGFTGKAITDVVNIGIGGSDLGPVMVTECLKPYAKPHMNVHFVSNVDGTHIAETLKLLNPETTLFMIASKTFTTQETMTNAYTARAWFLEKAGDKKHVARHFVALSTNKEAVEEFGIDSQNMFEFWDWVGGRYSLWSAIGLSIACYVGFENFHELLKGAYAMDVHFQKEPFERNIPVILALIGIWYNNFFNAQTEAILPYDQYMHRFPAYFQQGNMESNGKSVDRDGNPVTWQTGPIIWGEPGTNGQHAFYQLIHQGTKMIPADFLAPAQSHNPIGEHHKILLSNFFAQTEALMNGKTAAEVQKELEAAGKLPEEIAEILPHKVFDGNRPTNSILFKKLTPRTLGSLIAMYEHKIFVQGALWNIYSFDQWGVELGKQLAKKILPELEDERPVNSHDASTNGLINAFKHMMG.

The Proton donor role is filled by glutamate 355. Residues histidine 386 and lysine 514 contribute to the active site.

The protein belongs to the GPI family.

The protein localises to the cytoplasm. It catalyses the reaction alpha-D-glucose 6-phosphate = beta-D-fructose 6-phosphate. Its pathway is carbohydrate biosynthesis; gluconeogenesis. It functions in the pathway carbohydrate degradation; glycolysis; D-glyceraldehyde 3-phosphate and glycerone phosphate from D-glucose: step 2/4. Functionally, catalyzes the reversible isomerization of glucose-6-phosphate to fructose-6-phosphate. In Desulfatibacillum aliphaticivorans, this protein is Glucose-6-phosphate isomerase.